We begin with the raw amino-acid sequence, 929 residues long: LPS-assembly protein LptD (929 aa).

Residues 1-33 form the signal peptide; that stretch reads MAVKSLVFRRKFPLLVTGSLLALQPVAALTVQA. Residues 58–101 form a disordered region; the sequence is NLPPRPAHTATSVSTAAAGSSVSGSGGETVEAEPTQRLVTESGG. Residues 66-90 are compositionally biased toward low complexity; the sequence is TATSVSTAAAGSSVSGSGGETVEAE.

Belongs to the LptD family. In terms of assembly, component of the lipopolysaccharide transport and assembly complex. Interacts with LptE and LptA.

Its subcellular location is the cell outer membrane. Its function is as follows. Together with LptE, is involved in the assembly of lipopolysaccharide (LPS) at the surface of the outer membrane. In Pseudomonas aeruginosa (strain LESB58), this protein is LPS-assembly protein LptD.